Here is a 363-residue protein sequence, read N- to C-terminus: Phosrestin-2 (363 aa).

It belongs to the arrestin family.

This chain is Phosrestin-2 (ARR1), found in Calliphora vicina (Blue blowfly).